A 599-amino-acid chain; its full sequence is Sulfite reductase [NADPH] flavoprotein alpha-component (599 aa).

Residues 64-202 (ITLISASQTG…VAAQWRARIV (139 aa)) enclose the Flavodoxin-like domain. Residues 70 to 75 (SQTGNA), 117 to 120 (STQG), and 153 to 162 (LGDTSYEFFC) contribute to the FMN site. In terms of domain architecture, FAD-binding FR-type spans 234-448 (EAPLRASLSV…IEHNDNFRLP (215 aa)). FAD contacts are provided by residues Thr322, Ala356, 386–389 (RLYS), 404–406 (TVG), Tyr410, and 419–422 (GGAS). Residues 519–520 (SR), 525–529 (KIYVQ), and Asp561 each bind NADP(+). An FAD-binding site is contributed by Tyr599.

Belongs to the NADPH-dependent sulphite reductase flavoprotein subunit CysJ family. It in the N-terminal section; belongs to the flavodoxin family. This sequence in the C-terminal section; belongs to the flavoprotein pyridine nucleotide cytochrome reductase family. As to quaternary structure, alpha(8)-beta(8). The alpha component is a flavoprotein, the beta component is a hemoprotein. It depends on FAD as a cofactor. FMN serves as cofactor.

It carries out the reaction hydrogen sulfide + 3 NADP(+) + 3 H2O = sulfite + 3 NADPH + 4 H(+). It participates in sulfur metabolism; hydrogen sulfide biosynthesis; hydrogen sulfide from sulfite (NADPH route): step 1/1. Component of the sulfite reductase complex that catalyzes the 6-electron reduction of sulfite to sulfide. This is one of several activities required for the biosynthesis of L-cysteine from sulfate. The flavoprotein component catalyzes the electron flow from NADPH -&gt; FAD -&gt; FMN to the hemoprotein component. The chain is Sulfite reductase [NADPH] flavoprotein alpha-component from Salmonella arizonae (strain ATCC BAA-731 / CDC346-86 / RSK2980).